A 430-amino-acid chain; its full sequence is Histidinol dehydrogenase (430 aa).

Residues Ser237, Gln259, and His262 each contribute to the substrate site. The Zn(2+) site is built by Gln259 and His262. Active-site proton acceptor residues include Glu327 and His328. Substrate contacts are provided by His328, Asp361, Glu415, and His420. Position 361 (Asp361) interacts with Zn(2+). His420 is a Zn(2+) binding site.

This sequence belongs to the histidinol dehydrogenase family. It depends on Zn(2+) as a cofactor.

It catalyses the reaction L-histidinol + 2 NAD(+) + H2O = L-histidine + 2 NADH + 3 H(+). It participates in amino-acid biosynthesis; L-histidine biosynthesis; L-histidine from 5-phospho-alpha-D-ribose 1-diphosphate: step 9/9. Catalyzes the sequential NAD-dependent oxidations of L-histidinol to L-histidinaldehyde and then to L-histidine. This Mesorhizobium japonicum (strain LMG 29417 / CECT 9101 / MAFF 303099) (Mesorhizobium loti (strain MAFF 303099)) protein is Histidinol dehydrogenase.